A 639-amino-acid polypeptide reads, in one-letter code: UvrABC system protein C (639 aa).

Residues 20-97 (ERSGVYRMFD…IKKFQPKFNI (78 aa)) enclose the GIY-YIG domain. The 36-residue stretch at 207–242 (KELQENLSRKMEELSSQMRFEEAAEIRDRIKALSYV) folds into the UVR domain.

Belongs to the UvrC family. Interacts with UvrB in an incision complex.

The protein resides in the cytoplasm. The UvrABC repair system catalyzes the recognition and processing of DNA lesions. UvrC both incises the 5' and 3' sides of the lesion. The N-terminal half is responsible for the 3' incision and the C-terminal half is responsible for the 5' incision. The polypeptide is UvrABC system protein C (Rickettsia peacockii (strain Rustic)).